The primary structure comprises 369 residues: Glycolate oxidase 1 (369 aa).

Positions 1–360 constitute an FMN hydroxy acid dehydrogenase domain; it reads MGEITNVMEY…TRKHIITESD (360 aa). Y25 provides a ligand contact to glyoxylate. FMN contacts are provided by residues 78–80, S107, 128–130, and T156; these read PTA and QLY. Y130 contributes to the glyoxylate binding site. R165 lines the glyoxylate pocket. FMN is bound by residues K231 and S253. Residues H255 and R258 each coordinate glyoxylate. The Proton acceptor role is filled by H255. Residues 286–290 and 309–310 contribute to the FMN site; these read DGGVR and GR.

This sequence belongs to the FMN-dependent alpha-hydroxy acid dehydrogenase family. As to quaternary structure, homotetramer. The cofactor is FMN.

It localises to the peroxisome. It carries out the reaction glycolate + O2 = glyoxylate + H2O2. Its pathway is photosynthesis; photorespiration; glycine from 2-phosphoglycolate: step 2/3. Functionally, catalyzes the oxidation of glycolate to glyoxylate, with a reduction of O2 to H2O2. Is an essential enzyme in photorespiration in plants. Photorespiration plays a vital role in C4 photosynthesis in Z.mays and is essential for maize seedling development and maintaining low (non-toxic) levels of glycolate. The chain is Glycolate oxidase 1 from Zea mays (Maize).